A 122-amino-acid polypeptide reads, in one-letter code: Large ribosomal subunit protein uL18 (122 aa).

This sequence belongs to the universal ribosomal protein uL18 family. In terms of assembly, part of the 50S ribosomal subunit; part of the 5S rRNA/L5/L18/L25 subcomplex. Contacts the 5S and 23S rRNAs.

This is one of the proteins that bind and probably mediate the attachment of the 5S RNA into the large ribosomal subunit, where it forms part of the central protuberance. This chain is Large ribosomal subunit protein uL18, found in Hydrogenobaculum sp. (strain Y04AAS1).